Here is a 56-residue protein sequence, read N- to C-terminus: Conotoxin Bu12 (56 aa).

An N-terminal signal peptide occupies residues 1 to 2 (TA). The propeptide occupies 3 to 25 (EDSRGTQLHRALRKATKLPVSTR). Cystine bridges form between C26–C40, C33–C44, and C39–C49.

This sequence belongs to the conotoxin O1 superfamily. In terms of tissue distribution, expressed by the venom duct.

It localises to the secreted. In Conus bullatus (Bubble cone), this protein is Conotoxin Bu12.